A 114-amino-acid polypeptide reads, in one-letter code: Large ribosomal subunit protein P1 (114 aa).

The segment at 55 to 114 is disordered; that stretch reads EEAAAAPAAAPAASGSDDEAAADDGDDDEEADADEAAEAEDAGDDDDEEPSGEGLGDLFG. Positions 56–69 are enriched in low complexity; the sequence is EAAAAPAAAPAASG. The segment covering 70–105 has biased composition (acidic residues); the sequence is SDDEAAADDGDDDEEADADEAAEAEDAGDDDDEEPS.

The protein belongs to the eukaryotic ribosomal protein P1/P2 family. In terms of assembly, part of the 50S ribosomal subunit. Homodimer, it forms part of the ribosomal stalk which helps the ribosome interact with GTP-bound translation factors. Forms a heptameric uL10/P0(P1)2(P1)2(P1)2 complex, where uL10/P0 forms an elongated spine to which the P1 dimers bind in a sequential fashion.

Its function is as follows. Forms part of the ribosomal stalk, playing a central role in the interaction of the ribosome with GTP-bound translation factors. The sequence is that of Large ribosomal subunit protein P1 from Halobacterium salinarum (strain ATCC 700922 / JCM 11081 / NRC-1) (Halobacterium halobium).